Consider the following 1948-residue polypeptide: [F-actin]-monooxygenase MICAL2 (1948 aa).

Residues glycine 2–aspartate 494 are monooxygenase domain. FAD contacts are provided by residues cysteine 97, glutamate 116–arginine 118, arginine 123–asparagine 125, phenylalanine 183, tyrosine 298, and aspartate 398. A Calponin-homology (CH) domain is found at aspartate 516–glutamate 619. Serine 631 is subject to Phosphoserine. Residues arginine 660 to glutamine 681 carry the Nuclear localization signal motif. 3 disordered regions span residues proline 664 to asparagine 709, serine 753 to lysine 776, and lysine 891 to serine 923. The span at serine 693–asparagine 709 shows a compositional bias: polar residues. Positions alanine 896–proline 917 are enriched in pro residues. Residues aspartate 980 to serine 1042 enclose the LIM zinc-binding domain. Residues cysteine 982, cysteine 985, histidine 1003, cysteine 1006, cysteine 1009, cysteine 1012, cysteine 1032, and histidine 1035 each coordinate Zn(2+). Disordered stretches follow at residues glutamine 1045–glycine 1134, serine 1146–threonine 1185, and glutamine 1233–serine 1298. Over residues alanine 1050–glutamate 1059 the composition is skewed to basic and acidic residues. The span at glutamine 1233–alanine 1243 shows a compositional bias: polar residues. Low complexity predominate over residues serine 1254–proline 1271. Polar residues predominate over residues aspartate 1277–isoleucine 1292. The tract at residues threonine 1300–glutamate 1339 is interaction with MAPK1. Disordered regions lie at residues glutamine 1478–leucine 1505, serine 1519–valine 1622, glycine 1672–lysine 1726, and serine 1739–serine 1767. The segment covering alanine 1522–threonine 1534 has biased composition (basic and acidic residues). A compositionally biased stretch (low complexity) spans lysine 1570 to serine 1579. A compositionally biased stretch (polar residues) spans proline 1580–serine 1591. The segment covering glycine 1672 to glycine 1682 has biased composition (basic and acidic residues). Residue serine 1677 is modified to Phosphoserine. 2 stretches are compositionally biased toward polar residues: residues valine 1698–aspartate 1715 and glutamate 1747–serine 1756. The region spanning lysine 1786–asparagine 1936 is the bMERB domain.

Belongs to the Mical family. Interacts with PLXNA4. Interacts with RAB1B. Interacts with MAPK1/ERK2. Interacts with RAB35, RAB8A, RAB10, RAB13 and RAB15 (in their GTP-bound forms); binding to RAB35 is of low affinity compared to other Rab proteins; at least in case of RAB8A may bind 2 molecules of RAB8A simultaneously through a high and a low affinity binding site, respectively. May interact with MAPK1/ERK2. FAD is required as a cofactor.

It localises to the nucleus. Its subcellular location is the cytoplasm. The catalysed reaction is L-methionyl-[F-actin] + NADPH + O2 + H(+) = L-methionyl-(R)-S-oxide-[F-actin] + NADP(+) + H2O. Functionally, methionine monooxygenase that promotes depolymerization of F-actin by mediating oxidation of residues 'Met-44' and 'Met-47' on actin to form methionine-sulfoxide, resulting in actin filament disassembly and preventing repolymerization. Regulates the disassembly of branched actin networks also by oxidizing ARP3B-containing ARP2/3 complexes leading to ARP3B dissociation from the network. Acts as a key regulator of the SRF signaling pathway elicited by nerve growth factor and serum: mediates oxidation and subsequent depolymerization of nuclear actin, leading to increase MKL1/MRTF-A presence in the nucleus and promote SRF:MKL1/MRTF-A-dependent gene transcription. Does not activate SRF:MKL1/MRTF-A through RhoA. The chain is [F-actin]-monooxygenase MICAL2 from Rattus norvegicus (Rat).